Here is a 138-residue protein sequence, read N- to C-terminus: Acidic phospholipase A2 MVL-PLA2 (138 aa).

The signal sequence occupies residues 1–16; sequence MRTLWIVAVCLMGVEG. Disulfide bonds link C42–C131, C44–C60, C59–C111, C65–C138, C66–C104, C73–C97, and C91–C102. The Ca(2+) site is built by Y43, G45, and G47. The active site involves H63. A Ca(2+)-binding site is contributed by D64. Positions 86–88 match the May inhibit integrin function (Atypical cell attachment site) motif; it reads NGD. D105 is an active-site residue.

The protein belongs to the phospholipase A2 family. Group II subfamily. D49 sub-subfamily. It depends on Ca(2+) as a cofactor. Expressed by the venom gland.

The protein resides in the secreted. It catalyses the reaction a 1,2-diacyl-sn-glycero-3-phosphocholine + H2O = a 1-acyl-sn-glycero-3-phosphocholine + a fatty acid + H(+). In terms of biological role, snake venom phospholipase A2 (PLA2) that displays an inhibitory effect, independent from its catalytic activity, on tumor cell adhesion and migration. This effect is mediated via specific inhibition of integrins alpha-5/beta-1 (ITGA5/ITGB1), alpha-v/beta-3 (ITGAV/ITGB3) and alpha-v/beta-6 (ITGAV/ITGB6). PLA2 catalyzes the calcium-dependent hydrolysis of the 2-acyl groups in 3-sn-phosphoglycerides. The chain is Acidic phospholipase A2 MVL-PLA2 from Macrovipera lebetina transmediterranea (Blunt-nosed viper).